We begin with the raw amino-acid sequence, 150 residues long: Leukotriene C4 synthase (150 aa).

Over 1–6 (MKDEVA) the chain is Cytoplasmic. A helical transmembrane segment spans residues 7–27 (LLASVTLLGVLLQAYFSLQVI). Topologically, residues 28–48 (SARRAFRVSPPLTTGPPEFER) are lumenal. Glutathione is bound at residue Arg30. The Proton donor role is filled by Arg31. Ser36 is subject to Phosphoserine. A helical membrane pass occupies residues 49 to 69 (IYRAQVNCSEYFPLFLAMLWV). Glutathione-binding positions include 51 to 55 (RAQVN) and 58 to 59 (EY). At 70–73 (AGIF) the chain is on the cytoplasmic side. Residues 74–94 (FHEGAAALCGLVYLFARLRYF) form a helical membrane-spanning segment. 93–97 (YFQGY) lines the glutathione pocket. Over 95-104 (QGYARSAQQR) the chain is Lumenal. Arg104 serves as the catalytic Proton acceptor. The chain crosses the membrane as a helical span at residues 105 to 124 (LAPLYASARALWLLVALAAL). Over 125–150 (GLLAHFLPAELRAALLGQLRKLLLRS) the chain is Cytoplasmic.

It belongs to the MAPEG family. Homotrimer. Interacts with ALOX5AP and ALOX5. Post-translationally, phosphorylation at Ser-36 by RPS6KB1 inhibits the leukotriene-C4 synthase activity.

Its subcellular location is the nucleus outer membrane. The protein localises to the endoplasmic reticulum membrane. The protein resides in the nucleus membrane. It carries out the reaction leukotriene C4 = leukotriene A4 + glutathione. The enzyme catalyses (13S,14S)-epoxy-(4Z,7Z,9E,11E,16Z,19Z)-docosahexaenoate + glutathione = (13R)-S-glutathionyl-(14S)-hydroxy-(4Z,7Z,9E,11E,16Z,19Z)-docosahexaenoate. The protein operates within lipid metabolism; leukotriene C4 biosynthesis. With respect to regulation, inhibited by MK886. Its function is as follows. Catalyzes the conjugation of leukotriene A4 with reduced glutathione (GSH) to form leukotriene C4 with high specificity. Can also catalyze the transfer of a glutathionyl group from glutathione (GSH) to 13(S),14(S)-epoxy-docosahexaenoic acid to form maresin conjugate in tissue regeneration 1 (MCTR1), a bioactive lipid mediator that possess potent anti-inflammatory and proresolving actions. The chain is Leukotriene C4 synthase (LTC4S) from Bos taurus (Bovine).